A 707-amino-acid polypeptide reads, in one-letter code: E3 ubiquitin-protein ligase MARCHF7 (707 aa).

The residue at position 1 (Met-1) is an N-acetylmethionine. Disordered stretches follow at residues 1 to 126 (MESK…QVPR), 157 to 279 (LMDY…RRTT), 294 to 343 (FFSR…RASE), 361 to 425 (SHNH…HIFR), and 444 to 473 (AANR…GRNT). Positions 17 to 33 (SSSLSARMMSGSRGSSL) are enriched in low complexity. The span at 37-48 (YHSRDSSFRLDS) shows a compositional bias: basic and acidic residues. Low complexity predominate over residues 52 to 65 (STSASASASPFQSA). 4 stretches are compositionally biased toward polar residues: residues 66 to 83 (WYSE…SQNQ), 95 to 126 (SCTN…QVPR), 189 to 212 (NSMS…HQTI), and 254 to 270 (ISNS…FQES). The segment covering 294-303 (FFSRRSSQDS) has biased composition (low complexity). Polar residues-rich tracts occupy residues 304–336 (LNTR…TSEV), 373–392 (FNQE…SLRN), and 412–421 (IPTSDTSSRS). Ser-317 and Ser-389 each carry phosphoserine. Residues 444 to 470 (AANRPQASAASSSATTGGSTSDSAQGG) show a composition bias toward low complexity. Residues 544–614 (SEEEEGDLCR…ELCKEKLELN (71 aa)) form an RING-CH-type zinc finger. Residues Cys-552, Cys-555, Cys-570, Cys-572, His-580, Cys-583, Cys-604, and Cys-607 each contribute to the Zn(2+) site. Residue Thr-686 is modified to Phosphothreonine. Ser-687 and Ser-691 each carry phosphoserine.

The protein resides in the cytoplasm. The catalysed reaction is S-ubiquitinyl-[E2 ubiquitin-conjugating enzyme]-L-cysteine + [acceptor protein]-L-lysine = [E2 ubiquitin-conjugating enzyme]-L-cysteine + N(6)-ubiquitinyl-[acceptor protein]-L-lysine.. Its pathway is protein modification; protein ubiquitination. E3 ubiquitin-protein ligase which may specifically enhance the E2 activity of HIP2. E3 ubiquitin ligases accept ubiquitin from an E2 ubiquitin-conjugating enzyme in the form of a thioester and then directly transfer the ubiquitin to targeted substrates. May be involved in T-cell proliferation by regulating LIF secretion. May play a role in lysosome homeostasis. Promotes 'Lys-6', 'Lys-11' and 'Lys-63'-linked mixed polyubiquitination on ATG14 leading to the inhibition of autophagy by impairing the interaction between ATG14 and STX7. Participates in the dopamine-mediated negative regulation of the NLRP3 inflammasome by promoting its uibiquitination and subsequent degradation. This chain is E3 ubiquitin-protein ligase MARCHF7 (MARCHF7), found in Pongo abelii (Sumatran orangutan).